A 760-amino-acid polypeptide reads, in one-letter code: ATP-dependent zinc metalloprotease FtsH (760 aa).

The Cytoplasmic segment spans residues 1–5 (MNRKN). Residues 6–26 (VTRTITAIAVVVLLGWSFFYF) form a helical membrane-spanning segment. Residues 27–110 (SDDTRGYKPV…KVSTVVNQGS (84 aa)) are Extracellular-facing. The helical transmembrane segment at 111-131 (ILGELLVYVLPLLLLVGLFVM) threads the bilayer. Topologically, residues 132–760 (FSRMQGGARM…EVSRTKPAHG (629 aa)) are cytoplasmic. Position 203–210 (203–210 (GPPGTGKT)) interacts with ATP. Position 425 (H425) interacts with Zn(2+). The active site involves E426. Positions 429 and 501 each coordinate Zn(2+). The segment at 616-760 (DFGGRIPSDK…EVSRTKPAHG (145 aa)) is disordered. Positions 650-669 (AFKAAIAQATQAAEAARSDA) are enriched in low complexity. Residues 740–750 (GSDESSAEQDD) are compositionally biased toward acidic residues.

The protein in the central section; belongs to the AAA ATPase family. This sequence in the C-terminal section; belongs to the peptidase M41 family. Homohexamer. Requires Zn(2+) as cofactor.

It is found in the cell membrane. Functionally, acts as a processive, ATP-dependent zinc metallopeptidase for both cytoplasmic and membrane proteins. Plays a role in the quality control of integral membrane proteins. The sequence is that of ATP-dependent zinc metalloprotease FtsH from Mycobacterium tuberculosis (strain CDC 1551 / Oshkosh).